Here is a 341-residue protein sequence, read N- to C-terminus: MTDIVYDKDADLSLIQGRKVAVIGYGSQGHAHALNLRDSGVEVVIGLKEGSTSRAKAEEQGFTVKTPSDASAWADVIVILAPDQHQRGLYADSVRDNLTEGKTLVFAHGFNIRFGYIEAPEGVDVVLVAPKGPGHTVRREFEAGRGVPVIVAVEVDASGKAWDLAWSYAKGIGGLRAGGIRTTFTEETETDLFGEQAVLCGGTSQLVQYGFETLIEAGYQPQIAYFEVLHELKLIVDLMWEGGIAKQRWSISDTAEYGDYVSGPRVISPDVKENMKAVLADIQSGAFADRFIKDQDAGAPEFLELRKKGEEHPIESTGRELRKLFAWNKADDDYTDGSVAR.

The KARI N-terminal Rossmann domain maps to 2–182 (TDIVYDKDAD…GGLRAGGIRT (181 aa)). Residues 25–28 (YGSQ), Lys48, Ser51, Ser53, and 83–86 (DQHQ) each bind NADP(+). The active site involves His108. An NADP(+)-binding site is contributed by Gly134. Positions 183-328 (TFTEETETDL…RELRKLFAWN (146 aa)) constitute a KARI C-terminal knotted domain. Residues Asp191, Glu195, Glu227, and Glu231 each coordinate Mg(2+). Residue Ser252 coordinates substrate.

This sequence belongs to the ketol-acid reductoisomerase family. Requires Mg(2+) as cofactor.

The catalysed reaction is (2R)-2,3-dihydroxy-3-methylbutanoate + NADP(+) = (2S)-2-acetolactate + NADPH + H(+). It carries out the reaction (2R,3R)-2,3-dihydroxy-3-methylpentanoate + NADP(+) = (S)-2-ethyl-2-hydroxy-3-oxobutanoate + NADPH + H(+). Its pathway is amino-acid biosynthesis; L-isoleucine biosynthesis; L-isoleucine from 2-oxobutanoate: step 2/4. It participates in amino-acid biosynthesis; L-valine biosynthesis; L-valine from pyruvate: step 2/4. In terms of biological role, involved in the biosynthesis of branched-chain amino acids (BCAA). Catalyzes an alkyl-migration followed by a ketol-acid reduction of (S)-2-acetolactate (S2AL) to yield (R)-2,3-dihydroxy-isovalerate. In the isomerase reaction, S2AL is rearranged via a Mg-dependent methyl migration to produce 3-hydroxy-3-methyl-2-ketobutyrate (HMKB). In the reductase reaction, this 2-ketoacid undergoes a metal-dependent reduction by NADPH to yield (R)-2,3-dihydroxy-isovalerate. This is Ketol-acid reductoisomerase (NADP(+)) from Clavibacter sepedonicus (Clavibacter michiganensis subsp. sepedonicus).